The following is a 1465-amino-acid chain: Transcriptional elongation regulator MINIYO (1465 aa).

Disordered regions lie at residues lysine 27–arginine 85, leucine 186–isoleucine 211, and threonine 1113–isoleucine 1135.

The protein belongs to the RPAP1 family. As to quaternary structure, interacts with HAG3, NRPB3 and NRPB10L. As to expression, expressed in root and shoot apices and in leaf and flower primordia. Detected in the endosperm, embryo, meristems and in organ primordia, but not in mature cells. Found exclusively in the vascular bundles in mature leaves.

The protein resides in the cytoplasm. Its subcellular location is the nucleus. Positive regulator of transcriptional elongation that is essential for cells to initiate differentiation. Interacts with RNA polymerase II and the Elongator complex and is required to sustain global levels of transcriptional elongation activity, specifically in differentiating tissues. This chain is Transcriptional elongation regulator MINIYO, found in Arabidopsis thaliana (Mouse-ear cress).